The sequence spans 236 residues: Ascorbate-specific transmembrane electron transporter 2 (236 aa).

Over 1–13 (MGLGLGVRAAPFT) the chain is Cytoplasmic. The chain crosses the membrane as a helical span at residues 14–34 (YAAHALAVAAAAMVLVWAIYF). In terms of domain architecture, Cytochrome b561 spans 15-219 (AAHALAVAAA…FGASVVVAAI (205 aa)). Residues 35–50 (RGGLAIEATNKNLIFN) lie on the Extracellular side of the membrane. Residues 51-71 (VHPVLMLIGYIIIGGEAIMVY) traverse the membrane as a helical segment. Heme b is bound at residue His52. 67–75 (AIMVYRVLP) provides a ligand contact to L-ascorbate. The Cytoplasmic segment spans residues 72-84 (RVLPTSNHETNKL). Residues 85 to 105 (IHLVLHGIALVLGAVGIYFAF) traverse the membrane as a helical segment. Residues His86 and His120 each coordinate heme b. At 106–122 (KNHNESGIANLYSLHSW) the chain is on the extracellular side. 116-125 (LYSLHSWIGI) lines the monodehydro-L-ascorbate radical pocket. Residues 123-143 (IGIGTITLYGIQWIVGFVTFF) form a helical membrane-spanning segment. At 144–153 (FPGAAPNVKK) the chain is on the cytoplasmic side. Residues 154–174 (GVLPWHILFGLFVYILALANA) form a helical membrane-spanning segment. His159 is a binding site for heme b. At 175-201 (ELGFLEKLTFLESSGLDKYGTEAFLVN) the chain is on the extracellular side. Residues 202-222 (FTALVVVLFGASVVVAAIAPV) form a helical membrane-spanning segment. Residues 223-236 (RLEEPQGYVPIPEN) are Cytoplasmic-facing.

Requires heme b as cofactor.

The protein resides in the membrane. Its function is as follows. Two-heme-containing cytochrome. Catalyzes ascorbate-dependent trans-membrane electron transfer by utilizing a concerted H(+)/e(-) transfer mechanism. The chain is Ascorbate-specific transmembrane electron transporter 2 from Zea mays (Maize).